The chain runs to 188 residues: MPVADTSQLTSGVAERYASSLFDLALEQGAVDSVTADLDRFQAMLDESADLKRFVASPVFSAEDQLKAIVAISEKAGISGFFANFLKVVARNRRLFALPGMIKAFRIIAANHRGEISAEVTSAHALSQAQETELKVALKSVTGKDVTIAVTVDPSILGGLIVKVGSRQIDTSLRTKLSTLKLALKEVG.

Belongs to the ATPase delta chain family. As to quaternary structure, F-type ATPases have 2 components, F(1) - the catalytic core - and F(0) - the membrane proton channel. F(1) has five subunits: alpha(3), beta(3), gamma(1), delta(1), epsilon(1). F(0) has three main subunits: a(1), b(2) and c(10-14). The alpha and beta chains form an alternating ring which encloses part of the gamma chain. F(1) is attached to F(0) by a central stalk formed by the gamma and epsilon chains, while a peripheral stalk is formed by the delta and b chains.

It localises to the cell inner membrane. F(1)F(0) ATP synthase produces ATP from ADP in the presence of a proton or sodium gradient. F-type ATPases consist of two structural domains, F(1) containing the extramembraneous catalytic core and F(0) containing the membrane proton channel, linked together by a central stalk and a peripheral stalk. During catalysis, ATP synthesis in the catalytic domain of F(1) is coupled via a rotary mechanism of the central stalk subunits to proton translocation. Its function is as follows. This protein is part of the stalk that links CF(0) to CF(1). It either transmits conformational changes from CF(0) to CF(1) or is implicated in proton conduction. The sequence is that of ATP synthase subunit delta from Rhizobium leguminosarum bv. trifolii (strain WSM2304).